The chain runs to 376 residues: Putative glutamate--cysteine ligase 2 (376 aa).

This sequence belongs to the glutamate--cysteine ligase type 2 family. YbdK subfamily.

It carries out the reaction L-cysteine + L-glutamate + ATP = gamma-L-glutamyl-L-cysteine + ADP + phosphate + H(+). ATP-dependent carboxylate-amine ligase which exhibits weak glutamate--cysteine ligase activity. This chain is Putative glutamate--cysteine ligase 2, found in Mycolicibacterium paratuberculosis (strain ATCC BAA-968 / K-10) (Mycobacterium paratuberculosis).